Reading from the N-terminus, the 159-residue chain is Ribosome maturation factor RimP (159 aa).

Belongs to the RimP family.

The protein localises to the cytoplasm. In terms of biological role, required for maturation of 30S ribosomal subunits. The polypeptide is Ribosome maturation factor RimP (Streptococcus pneumoniae (strain 70585)).